Here is a 424-residue protein sequence, read N- to C-terminus: MKPQWQQYIHIIKQVVKPALGCTEPIAAAYAAAVARALLGVEPDSIAVQVSDNLYKNSMGVFVPGTGKIGLAIAAAAGAIAGNPDAGLEVLAVITPEQVAKAQALIDAGKVTVERTETAEFIYCCVIAKKGDREALVKICGGHTLIAEKRLNGESVFSVDSTQAKATGSICEGVDITIESIYRFAQEVPFEEIKFILEASELNGKLSDEGMANPYGLEVGRTMKSGIAAGIIGEDLLNKIVMLTAAASDARMGGANLPAMSNLGSGNQGIAATIPVVLTAQCYKVSEEQLARALIMSHLGAIYIKSHYPPLSAFCGNTVTSAAASMAMVYLAGGSFEQSCFAIQNVISDSSGMVCDGAKASCAMKVSTSSSAAVRSFLMALSSHNVSGQGIIATDVEKTIKNIGKMILNGMSSTDVTIIDIMSA.

Belongs to the UPF0597 family.

The chain is UPF0597 protein Shew185_3080 from Shewanella baltica (strain OS185).